The sequence spans 639 residues: Poly(A)-specific ribonuclease PARN (639 aa).

D28 and E30 together coordinate a divalent metal cation. 2 positions are modified to phosphoserine: S163 and S167. The 68-residue stretch at 178 to 245 folds into the R3H domain; that stretch reads KKFIDQVVEK…ERYIVISKVD (68 aa). At K220 the chain carries N6-acetyllysine. D292 and D382 together coordinate a divalent metal cation. K499 carries the post-translational modification N6-acetyllysine. Residue S530 is modified to Phosphoserine. Residue S557 is modified to Phosphoserine; by MAPKAPK2. The segment at 560 to 639 is disordered; sequence APSTVGKRNL…ATLFEVPDTW (80 aa). Residues S583 and S587 each carry the phosphoserine modification. Residues 606-615 are compositionally biased toward basic residues; it reads KKAKKLKRMK. Phosphoserine occurs at positions 619, 623, and 628. The residue at position 631 (T631) is a Phosphothreonine.

This sequence belongs to the CAF1 family. As to quaternary structure, homodimer. Found in a mRNA decay complex with RENT1, RENT2 and RENT3B. Interacts with KHSRP. Interacts with CELF1/CUGBP1. Interacts with ZC3HAV1 in an RNA-independent manner. Interacts with DHX36. It depends on Mg(2+) as a cofactor. In terms of processing, phosphorylation by MAPKAPK2, preventing GADD45A mRNA degradation after genotoxic stress. In terms of tissue distribution, ubiquitous.

Its subcellular location is the nucleus. The protein localises to the cytoplasm. The protein resides in the nucleolus. It carries out the reaction Exonucleolytic cleavage of poly(A) to 5'-AMP.. In terms of biological role, 3'-exoribonuclease that has a preference for poly(A) tails of mRNAs, thereby efficiently degrading poly(A) tails. Exonucleolytic degradation of the poly(A) tail is often the first step in the decay of eukaryotic mRNAs and is also used to silence certain maternal mRNAs translationally during oocyte maturation and early embryonic development. Interacts with both the 3'-end poly(A) tail and the 5'-end cap structure during degradation, the interaction with the cap structure being required for an efficient degradation of poly(A) tails. Involved in nonsense-mediated mRNA decay, a critical process of selective degradation of mRNAs that contain premature stop codons. Also involved in degradation of inherently unstable mRNAs that contain AU-rich elements (AREs) in their 3'-UTR, possibly via its interaction with KHSRP. Probably mediates the removal of poly(A) tails of AREs mRNAs, which constitutes the first step of destabilization. Also able to recognize and trim poly(A) tails of microRNAs such as MIR21 and H/ACA box snoRNAs (small nucleolar RNAs) leading to microRNAs degradation or snoRNA increased stability. In Homo sapiens (Human), this protein is Poly(A)-specific ribonuclease PARN (PARN).